A 179-amino-acid polypeptide reads, in one-letter code: Large ribosomal subunit protein uL6 (179 aa).

It belongs to the universal ribosomal protein uL6 family. In terms of assembly, part of the 50S ribosomal subunit.

Its function is as follows. This protein binds to the 23S rRNA, and is important in its secondary structure. It is located near the subunit interface in the base of the L7/L12 stalk, and near the tRNA binding site of the peptidyltransferase center. The protein is Large ribosomal subunit protein uL6 of Alkaliphilus metalliredigens (strain QYMF).